The primary structure comprises 230 residues: Ribosome biogenesis protein SLX9 homolog (230 aa).

Over residues 1–11 (MGKVRGLRARV) the composition is skewed to basic residues. Disordered stretches follow at residues 1–42 (MGKV…SAAG) and 155–187 (LGLEAGSRRQARSRESNKPRPSELSRMSAAQRQ). Over residues 25-38 (GPAPPAPEATPPPA) the composition is skewed to pro residues. Residue threonine 34 is modified to Phosphothreonine. The span at 166–177 (RSRESNKPRPSE) shows a compositional bias: basic and acidic residues. A Phosphoserine modification is found at serine 203.

Belongs to the SLX9 family. Not detected in any tested tissue.

It is found in the nucleus. The protein localises to the nucleolus. In terms of biological role, may be involved in ribosome biogenesis. The polypeptide is Ribosome biogenesis protein SLX9 homolog (Homo sapiens (Human)).